Here is a 56-residue protein sequence, read N- to C-terminus: Large ribosomal subunit protein bL32 (56 aa).

The tract at residues 1–37 (MAVQQNKKSRSRRDMRRSHDALTTAAVSVDKTTGETH) is disordered. Positions 7-16 (KKSRSRRDMR) are enriched in basic residues.

Belongs to the bacterial ribosomal protein bL32 family.

The protein is Large ribosomal subunit protein bL32 of Haemophilus ducreyi (strain 35000HP / ATCC 700724).